A 273-amino-acid polypeptide reads, in one-letter code: Ribosomal RNA small subunit methyltransferase I (273 aa).

This sequence belongs to the methyltransferase superfamily. RsmI family.

The protein localises to the cytoplasm. The catalysed reaction is cytidine(1402) in 16S rRNA + S-adenosyl-L-methionine = 2'-O-methylcytidine(1402) in 16S rRNA + S-adenosyl-L-homocysteine + H(+). In terms of biological role, catalyzes the 2'-O-methylation of the ribose of cytidine 1402 (C1402) in 16S rRNA. In Xylella fastidiosa (strain 9a5c), this protein is Ribosomal RNA small subunit methyltransferase I.